Consider the following 774-residue polypeptide: Polyribonucleotide nucleotidyltransferase (774 aa).

Residues D485 and D491 each coordinate Mg(2+). In terms of domain architecture, KH spans 552 to 611 (PRIETMSVPKDKIRDIIGTGGKIIREIVATTGAKVDIDDDGTVKISSSDTAQIEAARNWI). The 69-residue stretch at 621–689 (GKIYTGKVVN…NRGKVRLSMR (69 aa)) folds into the S1 motif domain. Residues 689 to 774 (RVVDQETGEE…APAFLTRDDD (86 aa)) are disordered. Over residues 700–755 (PDTRPPREERPRGDRGDRGDRGPRRDGDRRREGGDRGPRRDRGDRGDRPRRERSEG) the composition is skewed to basic and acidic residues.

This sequence belongs to the polyribonucleotide nucleotidyltransferase family. The cofactor is Mg(2+).

It localises to the cytoplasm. The enzyme catalyses RNA(n+1) + phosphate = RNA(n) + a ribonucleoside 5'-diphosphate. Involved in mRNA degradation. Catalyzes the phosphorolysis of single-stranded polyribonucleotides processively in the 3'- to 5'-direction. The sequence is that of Polyribonucleotide nucleotidyltransferase from Rhizorhabdus wittichii (strain DSM 6014 / CCUG 31198 / JCM 15750 / NBRC 105917 / EY 4224 / RW1) (Sphingomonas wittichii).